Here is a 352-residue protein sequence, read N- to C-terminus: Ubiquitin thioesterase otulin (352 aa).

Positions 1–48 (MSRGTMPQPEAWPGASCAETPAREAAATARDGGKAAASGQPRPEMQCP) are disordered. Residues 18-37 (AETPAREAAATARDGGKAAA) show a composition bias toward low complexity. The PIM motif motif lies at 52-57 (EEDMYR). Tyrosine 56 is subject to Phosphotyrosine. Linear diubiquitin binding stretches follow at residues 95-96 (EW) and 124-126 (RGD). Positions 118-346 (TSIRRVRGDN…DRHYNIPVRV (229 aa)) constitute an OTU domain. Aspartate 126 is an active-site residue. The Nucleophile role is filled by cysteine 129. Linear diubiquitin binding stretches follow at residues 255–259 (FFSVL), 283–289 (TGGLEQV), and 336–338 (DDR). Histidine 339 is an active-site residue.

It belongs to the peptidase C65 family. Otulin subfamily. In terms of assembly, interacts (via the PUB domain) with RNF31 (via the PIM motif); the interaction is direct. Interacts with DVL2. Post-translationally, ubiquitinated. Acetylated. In terms of processing, phosphorylated. Phosphorylation at Tyr-56 prevents interaction with RNF31; dephosphorylation promotes interaction with RNF31 and the LUBAC complex.

It is found in the cytoplasm. It carries out the reaction Thiol-dependent hydrolysis of ester, thioester, amide, peptide and isopeptide bonds formed by the C-terminal Gly of ubiquitin (a 76-residue protein attached to proteins as an intracellular targeting signal).. In terms of biological role, deubiquitinase that specifically removes linear ('Met-1'-linked) polyubiquitin chains to substrates and acts as a regulator of angiogenesis and innate immune response. Required during angiogenesis, craniofacial and neuronal development by regulating the canonical Wnt signaling together with the LUBAC complex. Acts as a negative regulator of NF-kappa-B by regulating the activity of the LUBAC complex. OTULIN function is mainly restricted to homeostasis of the LUBAC complex: acts by removing 'Met-1'-linked autoubiquitination of the LUBAC complex, thereby preventing inactivation of the LUBAC complex. Acts as a key negative regulator of inflammation by restricting spontaneous inflammation and maintaining immune homeostasis. In myeloid cell, required to prevent unwarranted secretion of cytokines leading to inflammation and autoimmunity by restricting linear polyubiquitin formation. Plays a role in innate immune response by restricting linear polyubiquitin formation on LUBAC complex in response to NOD2 stimulation, probably to limit NOD2-dependent pro-inflammatory signaling. In Homo sapiens (Human), this protein is Ubiquitin thioesterase otulin.